Consider the following 581-residue polypeptide: Leucine-rich repeat-containing protein 15 (581 aa).

A signal peptide spans 1–21; sequence MPLKHYLLLLVGCQAWGAGLA. Positions 22-53 constitute an LRRNT domain; sequence YHGCPSECTCSRASQVECTGARIVAVPTPLPW. The Extracellular portion of the chain corresponds to 22-538; it reads YHGCPSECTC…VWGMTQAQSG (517 aa). LRR repeat units follow at residues 54–75, 78–99, 102–123, 126–147, 150–171, 174–195, 198–219, 222–243, 246–267, 270–291, 294–315, 318–339, 342–363, 366–387, and 390–411; these read NAMS…PFLN, ALIA…AFRN, SLRY…LFQG, SLES…HFSQ, NLKE…AFDH, GLTK…VFQH, NLQV…TFDG, NLQE…LFHN, NLQR…VFMQ, QLNR…IFGP, NLRE…VFSN, QLQV…AFNG, ELRE…VFRM, NLQN…IFAN, and GLMA…IFDH. Asn75 carries an N-linked (GlcNAc...) asparagine glycan. N-linked (GlcNAc...) asparagine glycosylation is present at Asn369. One can recognise an LRRCT domain in the interval 423-475; it reads NPWRCDSDILPLRNWLLLNQPRLGTDTVPVCFSPANVRGQSLIIINVNVAVPS. The segment at 489 to 509 is disordered; it reads WYPDTPSYPDTTSVSSTTELT. Low complexity predominate over residues 499-509; that stretch reads TTSVSSTTELT. The chain crosses the membrane as a helical span at residues 539–559; that stretch reads LAIAAIVIGIVALACSLAACV. At 560–581 the chain is on the cytoplasmic side; that stretch reads GCCCCKKRSQAVLMQMKAPNEC.

As to quaternary structure, (Microbial infection) Interacts with human coronavirus SARS-CoV-2 spike protein (via RBD domain); the interaction is direct and sequesters virions at the cell surface. In terms of assembly, (Microbial infection) Interacts with human coronavirus SARS-CoV-2 spike protein (via RBD domain); the interaction is direct. Expressed in brain and placenta. Expressed in lung fibroblasts. Expressed in chodrocytes.

The protein resides in the cell membrane. Its function is as follows. (Microbial infection) Modulates the ability of SARS-CoV-2 to infect host cells through interaction with the spike protein. Does not act as a SARS-CoV-2 entry receptor but sequesters virions and antagonizes in trans SARS-CoV-2 infection of ACE2(+) cells when expressed on nearby cells. This chain is Leucine-rich repeat-containing protein 15 (LRRC15), found in Homo sapiens (Human).